We begin with the raw amino-acid sequence, 645 residues long: Serine/threonine-protein kinase Nek11 (645 aa).

In terms of domain architecture, Protein kinase spans Tyr-29–Leu-287. ATP-binding positions include Leu-35 to Val-43 and Lys-61. The active-site Proton acceptor is the Asp-158. At Ser-273 the chain carries Phosphoserine; by CHEK1. A coiled-coil region spans residues Arg-346 to Gln-385. Positions Gly-399 to Pro-445 are disordered.

This sequence belongs to the protein kinase superfamily. NEK Ser/Thr protein kinase family. NIMA subfamily. Interacts with isoform 1 of NEK2. It depends on Mn(2+) as a cofactor. The cofactor is Mg(2+). In terms of processing, phosphorylated by NEK2. Phosphorylation at Ser-273 is important for its activation. Poorly expressed in cerebellum, trachea, lung, appendix, and uterus.

The protein localises to the nucleus. It is found in the nucleolus. The catalysed reaction is L-seryl-[protein] + ATP = O-phospho-L-seryl-[protein] + ADP + H(+). It catalyses the reaction L-threonyl-[protein] + ATP = O-phospho-L-threonyl-[protein] + ADP + H(+). Its activity is regulated as follows. Autorepressed by intramolecular binding of the C-terminus which dissociates following phosphorylation by NEK2 isoform 1 in G1/S-arrested cells. NEK2 isoform 2 is largely not present in the nucleolus, and does not appear to phosphorylate NEK11. Activated in response to DNA damage. Inhibited by zinc. In terms of biological role, protein kinase which plays an important role in the G2/M checkpoint response to DNA damage. Controls degradation of CDC25A by directly phosphorylating it on residues whose phosphorylation is required for BTRC-mediated polyubiquitination and degradation. This is Serine/threonine-protein kinase Nek11 from Homo sapiens (Human).